Here is a 220-residue protein sequence, read N- to C-terminus: Ribosomal RNA large subunit methyltransferase E (220 aa).

Positions 64, 66, 84, 100, and 125 each coordinate S-adenosyl-L-methionine. Lys-165 acts as the Proton acceptor in catalysis.

It belongs to the class I-like SAM-binding methyltransferase superfamily. RNA methyltransferase RlmE family.

The protein localises to the cytoplasm. It carries out the reaction uridine(2552) in 23S rRNA + S-adenosyl-L-methionine = 2'-O-methyluridine(2552) in 23S rRNA + S-adenosyl-L-homocysteine + H(+). In terms of biological role, specifically methylates the uridine in position 2552 of 23S rRNA at the 2'-O position of the ribose in the fully assembled 50S ribosomal subunit. In Thiobacillus denitrificans (strain ATCC 25259 / T1), this protein is Ribosomal RNA large subunit methyltransferase E.